Here is an 808-residue protein sequence, read N- to C-terminus: Phenylalanine--tRNA ligase beta subunit (808 aa).

One can recognise a tRNA-binding domain in the interval 40–155 (NQGATGVVVG…DDVEIGSDAL (116 aa)). One can recognise a B5 domain in the interval 409–484 (IEEPVVSLNL…RLYGYDNIPT (76 aa)). The Mg(2+) site is built by Asp-462, Asp-468, Glu-471, and Glu-472. An FDX-ACB domain is found at 714–807 (PRFPAISRDI…LEASTGAVLR (94 aa)).

It belongs to the phenylalanyl-tRNA synthetase beta subunit family. Type 1 subfamily. In terms of assembly, tetramer of two alpha and two beta subunits. Requires Mg(2+) as cofactor.

The protein resides in the cytoplasm. It catalyses the reaction tRNA(Phe) + L-phenylalanine + ATP = L-phenylalanyl-tRNA(Phe) + AMP + diphosphate + H(+). The protein is Phenylalanine--tRNA ligase beta subunit (pheT) of Halalkalibacterium halodurans (strain ATCC BAA-125 / DSM 18197 / FERM 7344 / JCM 9153 / C-125) (Bacillus halodurans).